A 308-amino-acid polypeptide reads, in one-letter code: Vacuolar lysine transporter YPQ1 (308 aa).

Topologically, residues 1–12 (MQLVPLELNRST) are vacuolar. A glycan (N-linked (GlcNAc...) asparagine) is linked at asparagine 9. Residues 10 to 76 (RSTLSGISGS…QHLLSTMIIL (67 aa)) form the PQ-loop 1 domain. The helical transmembrane segment at 13 to 33 (LSGISGSISISCWIIVFVPQI) threads the bilayer. Residues 34 to 44 (YENFYRKSSDG) lie on the Cytoplasmic side of the membrane. A helical transmembrane segment spans residues 45 to 65 (LSLLFVVLWLAGDVFNLMGAV). At 66–68 (MQH) the chain is on the vacuolar side. A helical membrane pass occupies residues 69-89 (LLSTMIILAAYYTVADIILLG). At 90–167 (QCLWYDNEEK…EVNSRNLIKD (78 aa)) the chain is on the cytoplasmic side. The chain crosses the membrane as a helical span at residues 168–188 (IFIVSGVVFVGFISWYVTYCV). The N-linked (GlcNAc...) asparagine glycan is linked to asparagine 189. At 189 to 205 (NYTQPPPVEDPSLPVPE) the chain is on the vacuolar side. Residues 206-226 (LQINWMAQIFGYLSALLYLGS) form a helical membrane-spanning segment. The 64-residue stretch at 211-274 (MAQIFGYLSA…ISLDWKYLIM (64 aa)) folds into the PQ-loop 2 domain. Topologically, residues 227–244 (RIPQILLNFKRKSCEGIS) are cytoplasmic. Residues 245–265 (FLFFLFACLGNTTFIFSVIVI) form a helical membrane-spanning segment. Residues 266–277 (SLDWKYLIMNAS) are Vacuolar-facing. The N-linked (GlcNAc...) asparagine glycan is linked to asparagine 275. Residues 278-298 (WLVGSIGTLFMDFVIFSQFFI) form a helical membrane-spanning segment. At 299-308 (YKRNKKFILN) the chain is on the cytoplasmic side.

Belongs to the laat-1 family.

The protein resides in the vacuole membrane. Its function is as follows. Amino acid transporter that moves lysine into the vacuole. May also contribute to low affinity arginine import into the vacuole. Has also been suggested to mediate export of cationic amino acids from the vacuole. May function as an amino acid/proton antiporter. The protein is Vacuolar lysine transporter YPQ1 (YPQ1) of Saccharomyces cerevisiae (strain ATCC 204508 / S288c) (Baker's yeast).